The following is a 302-amino-acid chain: UDP-N-acetylenolpyruvoylglucosamine reductase (302 aa).

One can recognise an FAD-binding PCMH-type domain in the interval 32 to 195 (LGGPADLLAR…VTVTLELVPD (164 aa)). R175 is a catalytic residue. The Proton donor role is filled by S224. E294 is a catalytic residue.

This sequence belongs to the MurB family. It depends on FAD as a cofactor.

Its subcellular location is the cytoplasm. It carries out the reaction UDP-N-acetyl-alpha-D-muramate + NADP(+) = UDP-N-acetyl-3-O-(1-carboxyvinyl)-alpha-D-glucosamine + NADPH + H(+). It participates in cell wall biogenesis; peptidoglycan biosynthesis. Cell wall formation. The sequence is that of UDP-N-acetylenolpyruvoylglucosamine reductase from Moorella thermoacetica (strain ATCC 39073 / JCM 9320).